Consider the following 96-residue polypeptide: Co-chaperonin GroES (96 aa).

The protein belongs to the GroES chaperonin family. As to quaternary structure, heptamer of 7 subunits arranged in a ring. Interacts with the chaperonin GroEL.

Its subcellular location is the cytoplasm. In terms of biological role, together with the chaperonin GroEL, plays an essential role in assisting protein folding. The GroEL-GroES system forms a nano-cage that allows encapsulation of the non-native substrate proteins and provides a physical environment optimized to promote and accelerate protein folding. GroES binds to the apical surface of the GroEL ring, thereby capping the opening of the GroEL channel. The chain is Co-chaperonin GroES from Legionella pneumophila (strain Paris).